A 672-amino-acid polypeptide reads, in one-letter code: MKRGVWLLIYCYATLTKGFSLPGLSPTTYHSGDEIPLLVNRLTPSIYFQHQDEEGNDVSGDKEHFLYSYDYYNKRFHFCRPEHVEKQPESLGSVIFGDRIYNSPFQLNMLEEKECVALCKSTIPGKDAKFINTLIKSGFFQNWLVDGLPAARKAYDSRTKTNYYGTGFELGFTDVKQTVDGKAVPSTMEELTSEASNEDVILDARLPKNVKPNLVKTVELPYFVNHFDIEVEFHDRGNDNYRVVGVIVNPVSIERSSPGACSTTGKPLILDEDKDNEVYFTYSVKFVASDTVWATRWDKYLHIYDPQIQWFSLINFSVIVILLSSVVMHSLLRALKSDLARYNELNLDNEFHEDSGWKLGHGDVFRTPSKSMLLSILVGSGMQLFLMVMCSIFFAAVGLVSPVSRGSLPTVMFVLYALFGFVGSYASMGVYKFFRGPYWKANMILTPILLPGAIFLLIVIMNFFLLFAHSSGVIPARSLFFIILLWFLVSVPLSFAGSIVAHKQCNWDEHPTKTNQIARQIPYQPWYLRTAQATLIAGIFSFGSIAVELYFIYSSLWFNKIFYMFGFLLFSFLLLTLTTSLVTILITYYSLCLENWLWQWRSFIIGGLGCSIYTFIHSILFTKFKLGGVITVVLYLGYSLIISALCCVVTGAIGFFSSMFFIRKIYSAIKVE.

Positions 1-18 (MKRGVWLLIYCYATLTKG) are cleaved as a signal peptide. Topologically, residues 19–307 (FSLPGLSPTT…DKYLHIYDPQ (289 aa)) are extracellular. The helical transmembrane segment at 308-328 (IQWFSLINFSVIVILLSSVVM) threads the bilayer. Residues 329 to 383 (HSLLRALKSDLARYNELNLDNEFHEDSGWKLGHGDVFRTPSKSMLLSILVGSGMQ) lie on the Cytoplasmic side of the membrane. A helical transmembrane segment spans residues 384 to 404 (LFLMVMCSIFFAAVGLVSPVS). At 405 to 410 (RGSLPT) the chain is on the extracellular side. Residues 411 to 431 (VMFVLYALFGFVGSYASMGVY) traverse the membrane as a helical segment. The Cytoplasmic portion of the chain corresponds to 432 to 447 (KFFRGPYWKANMILTP). Residues 448 to 468 (ILLPGAIFLLIVIMNFFLLFA) traverse the membrane as a helical segment. Topologically, residues 469–479 (HSSGVIPARSL) are extracellular. The chain crosses the membrane as a helical span at residues 480 to 500 (FFIILLWFLVSVPLSFAGSIV). At 501–532 (AHKQCNWDEHPTKTNQIARQIPYQPWYLRTAQ) the chain is on the cytoplasmic side. The helical transmembrane segment at 533-553 (ATLIAGIFSFGSIAVELYFIY) threads the bilayer. At 554-565 (SSLWFNKIFYMF) the chain is on the extracellular side. The helical transmembrane segment at 566–586 (GFLLFSFLLLTLTTSLVTILI) threads the bilayer. The Cytoplasmic segment spans residues 587–601 (TYYSLCLENWLWQWR). Residues 602-622 (SFIIGGLGCSIYTFIHSILFT) form a helical membrane-spanning segment. Over 623 to 628 (KFKLGG) the chain is Extracellular. A helical membrane pass occupies residues 629–649 (VITVVLYLGYSLIISALCCVV). The Cytoplasmic portion of the chain corresponds to 650–672 (TGAIGFFSSMFFIRKIYSAIKVE).

This sequence belongs to the nonaspanin (TM9SF) (TC 9.A.2) family.

It is found in the vacuole membrane. In terms of biological role, with EMP70 and TMN3, plays a critical role in the late stages of a nutrient-controlled pathway notably regulating FLO11 gene expression. Acts downstream of RAS2 and TOR. Essential for cell adhesion and filamentous growth. May play a role as effector of cellular copper homeostasis. This chain is Transmembrane 9 superfamily member 2 (TMN2), found in Saccharomyces cerevisiae (strain ATCC 204508 / S288c) (Baker's yeast).